A 187-amino-acid chain; its full sequence is Small ribosomal subunit protein uS5 (187 aa).

Residues 21–84 (MVDKLVHINR…ESAKRDMIFV (64 aa)) enclose the S5 DRBM domain.

Belongs to the universal ribosomal protein uS5 family. Part of the 30S ribosomal subunit. Contacts proteins S4 and S8.

In terms of biological role, with S4 and S12 plays an important role in translational accuracy. Functionally, located at the back of the 30S subunit body where it stabilizes the conformation of the head with respect to the body. The chain is Small ribosomal subunit protein uS5 from Mesorhizobium japonicum (strain LMG 29417 / CECT 9101 / MAFF 303099) (Mesorhizobium loti (strain MAFF 303099)).